A 437-amino-acid polypeptide reads, in one-letter code: Citrate synthase (437 aa).

Residues His316 and Asp372 contribute to the active site.

It belongs to the citrate synthase family. In terms of assembly, homohexamer.

It catalyses the reaction oxaloacetate + acetyl-CoA + H2O = citrate + CoA + H(+). It functions in the pathway carbohydrate metabolism; tricarboxylic acid cycle; isocitrate from oxaloacetate: step 1/2. Weakly inhibited by ATP (apparent Ki = 10 mm). The chain is Citrate synthase (gltA) from Corynebacterium glutamicum (strain ATCC 13032 / DSM 20300 / JCM 1318 / BCRC 11384 / CCUG 27702 / LMG 3730 / NBRC 12168 / NCIMB 10025 / NRRL B-2784 / 534).